Consider the following 482-residue polypeptide: ATP-dependent rRNA helicase rrp3 (482 aa).

The tract at residues 1–55 (MSSVKRRKTEKNTSSGLKSKQAKEPKEASPLSSPEPTEENQNNEIEEGTEEEEVT) is disordered. The span at 44 to 53 (EIEEGTEEEE) shows a compositional bias: acidic residues. The Q motif motif lies at 56–84 (KSFKDLGIVDSLCEACDTLGYKAPTPIQR). In terms of domain architecture, Helicase ATP-binding spans 87–258 (IPLALQGRDL…RASLKDPLRV (172 aa)). 100 to 107 (AETGSGKT) is an ATP binding site. The short motif at 206–209 (DEAD) is the DEAD box element. The Helicase C-terminal domain maps to 282 to 430 (HKDTYLIYLL…EYQTVKDEVM (149 aa)). 2 stretches are compositionally biased toward basic and acidic residues: residues 444–456 (RNEMKNLHEDRGK) and 472–482 (RGRDEMDREEG). Positions 444 to 482 (RNEMKNLHEDRGKKGAVLKGRRPANGAKRGRDEMDREEG) are disordered.

Belongs to the DEAD box helicase family. DDX47/RRP3 subfamily. As to quaternary structure, interacts with the SSU processome.

Its subcellular location is the nucleus. It carries out the reaction ATP + H2O = ADP + phosphate + H(+). In terms of biological role, ATP-dependent rRNA helicase required for pre-ribosomal RNA processing. Involved in the maturation of the 35S-pre-rRNA and to its cleavage to mature 18S rRNA. The chain is ATP-dependent rRNA helicase rrp3 from Sclerotinia sclerotiorum (strain ATCC 18683 / 1980 / Ss-1) (White mold).